Reading from the N-terminus, the 494-residue chain is GDP-fucose protein O-fucosyltransferase 4 (494 aa).

Over 1–7 (MAARYTE) the chain is Cytoplasmic. Residues 8–24 (AVLAALGVLSVCSASSS) form a helical; Signal-anchor for type II membrane protein membrane-spanning segment. The Lumenal segment spans residues 25–494 (SGSGASGKAG…EIFMKRNKNL (470 aa)). A glycan (N-linked (GlcNAc...) asparagine) is linked at Asn-167. Cys-390 and Cys-393 are disulfide-bonded.

The protein belongs to the glycosyltransferase 10 family.

The protein resides in the endoplasmic reticulum membrane. The enzyme catalyses L-threonyl-[protein] + GDP-beta-L-fucose = 3-O-(alpha-L-fucosyl)-L-threonyl-[protein] + GDP + H(+). It catalyses the reaction L-seryl-[protein] + GDP-beta-L-fucose = 3-O-(alpha-L-fucosyl)-L-seryl-[protein] + GDP + H(+). Its pathway is protein modification; protein glycosylation. In terms of biological role, protein O-fucosyltransferase that specifically catalyzes O-fucosylation of serine or threonine residues in EMI domains of target proteins, such as MMRN1, MMRN2 and EMID1. Attaches fucose through an O-glycosidic linkage. O-fucosylation of EMI domain-containing proteins may be required for facilitating protein folding and secretion. Also shows minor alpha-(1,3)-fucosyltransferase activity toward activity toward biantennary N-glycan acceptors. However, this was tested with a library of synthetic substrates and this activity is unsure in vivo. This chain is GDP-fucose protein O-fucosyltransferase 4 (Fut11), found in Rattus norvegicus (Rat).